Here is a 104-residue protein sequence, read N- to C-terminus: Complex III assembly factor LYRM7 (104 aa).

This sequence belongs to the complex I LYR family. In terms of assembly, interacts with UQCRFS1.

Its subcellular location is the mitochondrion matrix. Functionally, assembly factor required for Rieske Fe-S protein UQCRFS1 incorporation into the cytochrome b-c1 (CIII) complex. Functions as a chaperone, binding to this subunit within the mitochondrial matrix and stabilizing it prior to its translocation and insertion into the late CIII dimeric intermediate within the mitochondrial inner membrane. This chain is Complex III assembly factor LYRM7 (LYRM7), found in Danio rerio (Zebrafish).